We begin with the raw amino-acid sequence, 745 residues long: MERVWEAYGLTEEEYRKILKTLKREPNHVELGVLGALWSEHCSYKSSKKHLKKFPTKAEWVVQGPGENAGVVKIDEKVWVAFKVESHNHPSYIEPFHGAATGVGGIIRDVLSMGARPIALADSLRFGEFNYHETKRLVKGVVSGISFYGNCIGVPTVAGETVFEPSYKTNPLVNAFCLGVIPAGRMYRARATREGQLLFLIGSSTGRDGIFGAVMASGEFSEDVEEKRPNVQIGDPYFGKKLVEAIMEIVEKDLIVGMQDLGAAGLAGSASEIAAKSEKGVELYLENVPLREKDMNPYEILLSESQERMLLVVEEENVEKVKEIANKWHLEGAVVGKITDDDTFRAYYKGELVAELPVSLIVDEAPVYDRPYKEPEYMKEVRNFNQEELPQTDVKEALKKLLSSPNISCKEWVYTQYDYQVGTNTLLIPGHDAAVLRLKWVLRPELTTEKGIAISSEGNGRMVYLNPYEGGKFVVAEVCRNLACVGAKPLAITDCLNFGNPERPEIMWQFVKAVEGMAEACEELGIPVVSGNVSLYNETVEKNEIRNVFPTPIVVGVGVLEKAEKYTPSKVEKESELYLVGNLEENLRLDGSEYLKVIHGLIKGDVPPVDLEKEKILINLLISFNNKELITCAHDVSVGGLLIALLEMVFRTPYGLEVEVYTDERPDVFFFSENPTRVIIGVESDKAEEVKNAVEKAGLEWMYIGKTTEEKKIKVTFNGDTLLEDELEEYEKLWRTSLEKLLGST.

The active site involves His-41. ATP-binding residues include Tyr-44 and Lys-83. Glu-85 provides a ligand contact to Mg(2+). Substrate-binding positions include 86 to 89 (SHNH) and Arg-108. The Proton acceptor role is filled by His-87. Asp-109 contributes to the Mg(2+) binding site. Gln-232 contacts substrate. Residue Asp-260 participates in Mg(2+) binding. 304–306 (ESQ) is a binding site for substrate. Positions 494 and 531 each coordinate ATP. Asn-532 lines the Mg(2+) pocket. Position 534 (Ser-534) interacts with substrate.

Belongs to the FGAMS family. Monomer. Part of the FGAM synthase complex composed of 1 PurL, 1 PurQ and 2 PurS subunits.

Its subcellular location is the cytoplasm. It carries out the reaction N(2)-formyl-N(1)-(5-phospho-beta-D-ribosyl)glycinamide + L-glutamine + ATP + H2O = 2-formamido-N(1)-(5-O-phospho-beta-D-ribosyl)acetamidine + L-glutamate + ADP + phosphate + H(+). The protein operates within purine metabolism; IMP biosynthesis via de novo pathway; 5-amino-1-(5-phospho-D-ribosyl)imidazole from N(2)-formyl-N(1)-(5-phospho-D-ribosyl)glycinamide: step 1/2. Part of the phosphoribosylformylglycinamidine synthase complex involved in the purines biosynthetic pathway. Catalyzes the ATP-dependent conversion of formylglycinamide ribonucleotide (FGAR) and glutamine to yield formylglycinamidine ribonucleotide (FGAM) and glutamate. The FGAM synthase complex is composed of three subunits. PurQ produces an ammonia molecule by converting glutamine to glutamate. PurL transfers the ammonia molecule to FGAR to form FGAM in an ATP-dependent manner. PurS interacts with PurQ and PurL and is thought to assist in the transfer of the ammonia molecule from PurQ to PurL. This is Phosphoribosylformylglycinamidine synthase subunit PurL from Aquifex aeolicus (strain VF5).